We begin with the raw amino-acid sequence, 226 residues long: V-type proton ATPase subunit E 1 (226 aa).

At alanine 2 the chain carries N-acetylalanine. At tyrosine 56 the chain carries Phosphotyrosine.

Belongs to the V-ATPase E subunit family. V-ATPase is a heteromultimeric enzyme made up of two complexes: the ATP-hydrolytic V1 complex and the proton translocation V0 complex. The V1 complex consists of three catalytic AB heterodimers that form a heterohexamer, three peripheral stalks each consisting of EG heterodimers, one central rotor including subunits D and F, and the regulatory subunits C and H. The proton translocation complex V0 consists of the proton transport subunit a, a ring of proteolipid subunits c9c'', rotary subunit d, subunits e and f, and the accessory subunits ATP6AP1/Ac45 and ATP6AP2/PRR. Interacts with RABL2/RABL2A; binds preferentially to GTP-bound RABL2. Interacts with ALDOC. Interacts with RAB11B. In terms of tissue distribution, expressed within the midpiece of sperm tail (at protein level). Kidney; localizes to early distal nephron, encompassing thick ascending limbs and distal convoluted tubules (at protein level).

Its subcellular location is the apical cell membrane. The protein resides in the cytoplasmic vesicle. It is found in the secretory vesicle. The protein localises to the synaptic vesicle membrane. It localises to the clathrin-coated vesicle membrane. Subunit of the V1 complex of vacuolar(H+)-ATPase (V-ATPase), a multisubunit enzyme composed of a peripheral complex (V1) that hydrolyzes ATP and a membrane integral complex (V0) that translocates protons. V-ATPase is responsible for acidifying and maintaining the pH of intracellular compartments and in some cell types, is targeted to the plasma membrane, where it is responsible for acidifying the extracellular environment. The polypeptide is V-type proton ATPase subunit E 1 (Atp6v1e1) (Mus musculus (Mouse)).